We begin with the raw amino-acid sequence, 1220 residues long: ATP-dependent helicase/nuclease subunit A (1220 aa).

The UvrD-like helicase ATP-binding domain maps to Val-9–Arg-473. Ala-30–Thr-37 contacts ATP. Positions Pro-474 to Gly-782 constitute a UvrD-like helicase C-terminal domain.

The protein belongs to the helicase family. AddA subfamily. Heterodimer of AddA and AddB/RexB. Mg(2+) is required as a cofactor.

It catalyses the reaction Couples ATP hydrolysis with the unwinding of duplex DNA by translocating in the 3'-5' direction.. It carries out the reaction ATP + H2O = ADP + phosphate + H(+). In terms of biological role, the heterodimer acts as both an ATP-dependent DNA helicase and an ATP-dependent, dual-direction single-stranded exonuclease. Recognizes the chi site generating a DNA molecule suitable for the initiation of homologous recombination. The AddA nuclease domain is required for chi fragment generation; this subunit has the helicase and 3' -&gt; 5' nuclease activities. This Staphylococcus carnosus (strain TM300) protein is ATP-dependent helicase/nuclease subunit A.